Consider the following 539-residue polypeptide: CTP synthase (539 aa).

Residues 1–267 are amidoligase domain; sequence MTKYIFVTGG…DQKVVDFLHI (267 aa). Ser13 is a CTP binding site. Residue Ser13 coordinates UTP. Residue 14–19 coordinates ATP; that stretch reads SLGKGI. Tyr54 serves as a coordination point for L-glutamine. Asp71 contributes to the ATP binding site. Positions 71 and 141 each coordinate Mg(2+). Residues 148–150, 188–193, and Lys224 each bind CTP; these read DME and KSKPTQ. UTP contacts are provided by residues 188 to 193 and Lys224; that span reads KSKPTQ. Residues 294–537 enclose the Glutamine amidotransferase type-1 domain; the sequence is KITLVGKYVE…IGAASGLQVD (244 aa). Gly356 contributes to the L-glutamine binding site. Residue Cys383 is the Nucleophile; for glutamine hydrolysis of the active site. Residues 384–387, Glu407, and Arg465 contribute to the L-glutamine site; that span reads LGMQ. Residues His510 and Glu512 contribute to the active site.

Belongs to the CTP synthase family. As to quaternary structure, homotetramer.

The catalysed reaction is UTP + L-glutamine + ATP + H2O = CTP + L-glutamate + ADP + phosphate + 2 H(+). It carries out the reaction L-glutamine + H2O = L-glutamate + NH4(+). The enzyme catalyses UTP + NH4(+) + ATP = CTP + ADP + phosphate + 2 H(+). Its pathway is pyrimidine metabolism; CTP biosynthesis via de novo pathway; CTP from UDP: step 2/2. Its activity is regulated as follows. Allosterically activated by GTP, when glutamine is the substrate; GTP has no effect on the reaction when ammonia is the substrate. The allosteric effector GTP functions by stabilizing the protein conformation that binds the tetrahedral intermediate(s) formed during glutamine hydrolysis. Inhibited by the product CTP, via allosteric rather than competitive inhibition. Catalyzes the ATP-dependent amination of UTP to CTP with either L-glutamine or ammonia as the source of nitrogen. Regulates intracellular CTP levels through interactions with the four ribonucleotide triphosphates. In Lactobacillus delbrueckii subsp. bulgaricus (strain ATCC 11842 / DSM 20081 / BCRC 10696 / JCM 1002 / NBRC 13953 / NCIMB 11778 / NCTC 12712 / WDCM 00102 / Lb 14), this protein is CTP synthase.